Reading from the N-terminus, the 320-residue chain is MRPAGTLASFLERCSARKRGRGCVVLTGAGCSTESGIPDYRGPNGQYHRADFVLLTFQKFMRDDNEKRRYWARSMLGYSTMCGASCNAAHMALQAFTKSGAVAHILTQNVDGLHHLATYGGVGDAEEEHYYKYTTSDAPLKELHGNIHNVICTSCGFFMPRARLQRELRERNPGFYEQYGADVSRTRPDGDYSAPTEAVNAMHLVMCPRCNGFFKPHVVLFGENVPKPIVEATMSLVRDKASCLLCLGTSLQVYSAYRYVLQANQLGIPVAIVNAGTTRGDAIADLKLDVESVGSVLAETAHEMLGVPASMFFRRKTIQL.

The N-terminal 22 residues, 1–22, are a transit peptide targeting the mitochondrion; that stretch reads MRPAGTLASFLERCSARKRGRG. Residues 23–320 form the Deacetylase sirtuin-type domain; it reads CVVLTGAGCS…MFFRRKTIQL (298 aa). NAD(+) contacts are provided by residues 28-48 and 108-111; these read GAGC…GQYH and QNVD. Residue His-144 is the Proton acceptor of the active site. Positions 152, 155, 207, and 210 each coordinate Zn(2+). NAD(+) is bound by residues 248-250, 274-276, and Gly-294; these read GTS and NAG.

Belongs to the sirtuin family. Class II subfamily. Requires Zn(2+) as cofactor.

It localises to the mitochondrion matrix. It catalyses the reaction N(6)-acetyl-L-lysyl-[protein] + NAD(+) + H2O = 2''-O-acetyl-ADP-D-ribose + nicotinamide + L-lysyl-[protein]. In terms of biological role, NAD-dependent protein deacylase. Catalyzes the NAD-dependent hydrolysis of acyl groups from lysine residues. This chain is NAD-dependent protein deacylase SIR2rp2 (SIR2rp2), found in Leishmania major.